A 431-amino-acid chain; its full sequence is MRYQRPKGTADILPGDSQTWQFVEATARQLFANYRFEEIRTPMFENFEVFSRTSGDTSDIVTKEMYDFKDKGDRHLSLRPEGTAGVVRAFVENKLYGPETQKPYKVYYMGPMFRYERPQSGRQRQFHQIGVEAFGSDAPELDVEVIALGMNLLGKLGLTHLRLAVNTLGDQETRTAYRQALIDFLEPHFDELSEDSKVRLHKNPLRVLDSKDKHDQELVADAPSILDFLTPTATAHFDRVKASLDALGIDYDVDATMVRGLDYYNHTIFEIMADSPALGEGYTTVLAGGRYNGLVEELGGPEMPGVGFGLGVERLVLLMQAEQVAIPDNHPLDVYVVGIGDQTSLATLKIVQAIRQSGLTADRDYLDRKPKAQFKTANRLNAAYTLTIGEQELADHTANLKSMATGEEISVPLADIYQDFQNVVATKFTAK.

The protein belongs to the class-II aminoacyl-tRNA synthetase family. In terms of assembly, homodimer.

Its subcellular location is the cytoplasm. The enzyme catalyses tRNA(His) + L-histidine + ATP = L-histidyl-tRNA(His) + AMP + diphosphate + H(+). In Levilactobacillus brevis (strain ATCC 367 / BCRC 12310 / CIP 105137 / JCM 1170 / LMG 11437 / NCIMB 947 / NCTC 947) (Lactobacillus brevis), this protein is Histidine--tRNA ligase.